Reading from the N-terminus, the 285-residue chain is Chitinase 4 (285 aa).

An N-terminal signal peptide occupies residues 1–27; that stretch reads MAAKMATMVALVFGLALLLSAAAPAAA. The 35-residue stretch at 28–62 folds into the Chitin-binding type-1 domain; sequence QNCGCQDGYCCSQWGYCGTTEAYCGQGCQSGPCWG. 7 cysteine pairs are disulfide-bonded: C30-C38, C32-C44, C37-C51, C55-C60, C104-C153, C166-C175, and C253-C285. E148 (proton donor) is an active-site residue.

This sequence belongs to the glycosyl hydrolase 19 family. Chitinase class IV subfamily. In terms of tissue distribution, expressed at low levels in leaves, sheaths and meristems.

It catalyses the reaction Random endo-hydrolysis of N-acetyl-beta-D-glucosaminide (1-&gt;4)-beta-linkages in chitin and chitodextrins.. Functionally, hydrolyzes chitin and may function in reproductive organs during embryogenesis and seed maturation. In Oryza sativa subsp. japonica (Rice), this protein is Chitinase 4 (Cht4).